The sequence spans 23 residues: Septenin 2c (23 aa).

Expressed in skin granular glands.

The protein resides in the secreted. In terms of biological role, may act as an antimicrobial peptide. This chain is Septenin 2c, found in Osteopilus septentrionalis (Cuban treefrog).